The following is a 328-amino-acid chain: Ribosomal RNA large subunit methyltransferase F (328 aa).

A disordered region spans residues 1–31; sequence MTDTRKPPRKKPQRPAKPAAPREKATLHPRN.

It belongs to the methyltransferase superfamily. METTL16/RlmF family.

The protein resides in the cytoplasm. It carries out the reaction adenosine(1618) in 23S rRNA + S-adenosyl-L-methionine = N(6)-methyladenosine(1618) in 23S rRNA + S-adenosyl-L-homocysteine + H(+). Functionally, specifically methylates the adenine in position 1618 of 23S rRNA. The sequence is that of Ribosomal RNA large subunit methyltransferase F from Pseudomonas syringae pv. syringae (strain B728a).